A 105-amino-acid polypeptide reads, in one-letter code: uncharacterized protein (105 aa).

Transmembrane regions (helical) follow at residues 14–34 (ILLMLRLAVTAVAVFLAIVAW), 41–61 (ETVCFIAGVLCMYLAQLFAFL), and 80–100 (VGFTLELLPLACFIASLIFTI).

It is found in the cell membrane. This is an uncharacterized protein from Treponema pallidum (strain Nichols).